A 627-amino-acid chain; its full sequence is MITFKSIALTIIFLSYFVSCVSSQRETKFLNHGFLGANLLNFGSSKVYPSGLLELTNTSMRQIGQAFHGFPIPLSNPNSTNSVSFSTSFIFAITQGTGAPGHGLAFVISPSMDFSGAFPSNYLGLFNTSNNGNSLNRILAIEFDTVQAVELNDIDDNHVGIDLNGVISIASAPAAYFDDREAKNISLRLASGKPVRVWIEYNATETMLNVTLAPLDRPKPSIPLLSRKMNLSGIFSQEHHVGFSASTGTVASSHFVLGWSFNIEGKESDFDITKLPSLPDPPPTLSPSPSPPVSTEKKSNNTMLIIIVAASATVALMILIFSGFWFLRRDKIFFIGGARKFSYQTISNATGGFDNSKLLGERNSGSFYKGQLAPTEIIAVKKITCTTRQQKTTLIAEIDAISKIKQRNLVNLHGYCSKGKDIYLVYEYVPNGSLDRFLFNNDRPVLTWSDRFCIIKGIAAALQHLHGEGQKPLIHGNVKASNVLLDEELNARLGDYGQGSRHSTTGHVAPELVNTGKVTRDTDVFAFGVLMMEIVCGRKAIEPTKAPEEISLVNWVLQGFKKGDLLMSCDTRINRENLVAREVLLVLKTGLLCANRSPESRPMMKNVFRYLEGTEALPHDDYLFYGV.

The signal sequence occupies residues 1-23 (MITFKSIALTIIFLSYFVSCVSS). Residues 24-303 (QRETKFLNHG…STEKKSNNTM (280 aa)) are Extracellular-facing. The legume-lectin like stretch occupies residues 26–262 (ETKFLNHGFL…SHFVLGWSFN (237 aa)). Asn-57, Asn-78, Asn-127, Asn-184, Asn-202, Asn-209, and Asn-230 each carry an N-linked (GlcNAc...) asparagine glycan. The tract at residues 272-297 (ITKLPSLPDPPPTLSPSPSPPVSTEK) is disordered. The span at 278-292 (LPDPPPTLSPSPSPP) shows a compositional bias: pro residues. N-linked (GlcNAc...) asparagine glycosylation is present at Asn-300. The helical transmembrane segment at 304 to 324 (LIIIVAASATVALMILIFSGF) threads the bilayer. Over 325 to 627 (WFLRRDKIFF…PHDDYLFYGV (303 aa)) the chain is Cytoplasmic. Residues 353-623 (FDNSKLLGER…TEALPHDDYL (271 aa)) enclose the Protein kinase domain. ATP-binding positions include 359–367 (LGERNSGSF) and Lys-381.

The protein in the C-terminal section; belongs to the protein kinase superfamily. Ser/Thr protein kinase family. In the N-terminal section; belongs to the leguminous lectin family.

It is found in the cell membrane. The sequence is that of Probable inactive L-type lectin-domain containing receptor kinase III.1 (LECRK31) from Arabidopsis thaliana (Mouse-ear cress).